The following is a 366-amino-acid chain: Prostaglandin F2-alpha receptor (366 aa).

Over 1–31 (MSMNSSKQPVSPAAGLIANTTCQTENRLSVF) the chain is Extracellular. N-linked (GlcNAc...) asparagine glycosylation is found at asparagine 4 and asparagine 19. The helical transmembrane segment at 32–55 (FSIIFMTVGILSNSLAIAILMKAY) threads the bilayer. The Cytoplasmic segment spans residues 56-69 (QRFRQKSKASFLLL). The chain crosses the membrane as a helical span at residues 70 to 90 (ASGLVITDFFGHLINGGIAVF). Over 91–109 (VYASDKDWIRFDQSNILCS) the chain is Extracellular. The cysteines at positions 108 and 186 are disulfide-linked. Residues 110–131 (IFGISMVFSGLCPLFLGSAMAI) form a helical membrane-spanning segment. The Cytoplasmic segment spans residues 132-152 (ERCIGVTNPIFHSTKITSKHV). A helical membrane pass occupies residues 153 to 175 (KMILSGVCMFAVFVAVLPILGHR). Residues 176–198 (DYQIQASRTWCFYNTEHIEDWED) lie on the Extracellular side of the membrane. A helical transmembrane segment spans residues 199–224 (RFYLLFFSFLGLLALGVSFSCNAVTG). At 225–250 (VTLLRVKFRSQQHRQGRSHHLEMIIQ) the chain is on the cytoplasmic side. The helical transmembrane segment at 251–267 (LLAIMCVSCVCWSPFLV) threads the bilayer. The Extracellular portion of the chain corresponds to 268–285 (TMANIAINGNNSPVTCET). Residues 286–307 (TLFALRMATWNQILDPWVYILL) traverse the membrane as a helical segment. Topologically, residues 308-366 (RKAVLRNLYKLASRCCGVNIISLHIWELSSIKNSLKVAAISESPAAEKESQQASSEAGL) are cytoplasmic.

This sequence belongs to the G-protein coupled receptor 1 family.

It is found in the cell membrane. Receptor for prostaglandin F2-alpha (PGF2-alpha). The activity of this receptor is mediated by G proteins which activate a phosphatidylinositol-calcium second messenger system. Initiates luteolysis in the corpus luteum. This is Prostaglandin F2-alpha receptor (Ptgfr) from Mus musculus (Mouse).